A 131-amino-acid polypeptide reads, in one-letter code: Fumarate reductase subunit C (131 aa).

2 helical membrane-spanning segments follow: residues 60-80 and 110-130; these read FVGFLQNPVVLILNLIVLAAA and IKGLWAVTAVVTAVVLFVALF.

The protein belongs to the FrdC family. As to quaternary structure, part of an enzyme complex containing four subunits: a flavoprotein (FrdA), an iron-sulfur protein (FrdB), and two hydrophobic anchor proteins (FrdC and FrdD).

The protein resides in the cell inner membrane. Two distinct, membrane-bound, FAD-containing enzymes are responsible for the catalysis of fumarate and succinate interconversion; fumarate reductase is used in anaerobic growth, and succinate dehydrogenase is used in aerobic growth. Anchors the catalytic components of the fumarate reductase complex to the cell inner membrane, binds quinones. The polypeptide is Fumarate reductase subunit C (Enterobacter sp. (strain 638)).